Consider the following 472-residue polypeptide: Phosphoenolpyruvate carboxykinase (ATP), glycosomal (472 aa).

G221–T228 serves as a coordination point for ATP.

Belongs to the phosphoenolpyruvate carboxykinase (ATP) family. As to quaternary structure, homodimer.

The protein resides in the glycosome. It carries out the reaction oxaloacetate + ATP = phosphoenolpyruvate + ADP + CO2. It functions in the pathway carbohydrate biosynthesis; gluconeogenesis. In terms of biological role, P60 has the capability to bind to microtubules and membrane vesicles in vitro. In Trypanosoma brucei brucei, this protein is Phosphoenolpyruvate carboxykinase (ATP), glycosomal.